The sequence spans 138 residues: HTH-type transcriptional regulator CymR (138 aa).

An HTH rrf2-type domain is found at 2-125; it reads KISTKGRYGL…DSTTLEDLAS (124 aa). The segment at residues 28 to 51 is a DNA-binding region (H-T-H motif); the sequence is LKSIAQTNNLSEHYLEQLVSPLRN.

As to quaternary structure, homodimer. Forms homotetramers at higher concentrations of protein. Forms CymR(2):CysK(2) or CymR(4):CysK(4) complexes in the absence of O-acetylserine.

Its function is as follows. Master repressor of cysteine metabolism in B.subtilis. Controls the expression of genes involved either in cysteine synthesis from sulfide (cysK), sulfonates (ssu), or methionine (mccAB) or in cystine uptake (tcyP). Activity of CymR is positively regulated by CysK in response to cysteine availability. When cysteine is present, the pool of O-acetylserine (OAS) is low, which leads to the formation of a CymR-CysK complex and transcriptional repression of the CymR regulon occurs. In the absence of cysteine, the OAS pool is high and the CymR-CysK complex is mostly dissociated, leading to a faster dissociation of CymR from its DNA targets and the lifting of CymR-dependent repression. This Bacillus subtilis (strain 168) protein is HTH-type transcriptional regulator CymR (cymR).